Here is a 141-residue protein sequence, read N- to C-terminus: Nucleoside diphosphate kinase (141 aa).

ATP-binding residues include Lys-11, Phe-59, Arg-87, Thr-93, Arg-104, and Asn-114. Catalysis depends on His-117, which acts as the Pros-phosphohistidine intermediate.

The protein belongs to the NDK family. Homotetramer. Requires Mg(2+) as cofactor.

It is found in the cytoplasm. It carries out the reaction a 2'-deoxyribonucleoside 5'-diphosphate + ATP = a 2'-deoxyribonucleoside 5'-triphosphate + ADP. The catalysed reaction is a ribonucleoside 5'-diphosphate + ATP = a ribonucleoside 5'-triphosphate + ADP. In terms of biological role, major role in the synthesis of nucleoside triphosphates other than ATP. The ATP gamma phosphate is transferred to the NDP beta phosphate via a ping-pong mechanism, using a phosphorylated active-site intermediate. The polypeptide is Nucleoside diphosphate kinase (Acidithiobacillus ferrooxidans (strain ATCC 53993 / BNL-5-31) (Leptospirillum ferrooxidans (ATCC 53993))).